The primary structure comprises 565 residues: MEPKTKKQRSLYIPYAGPVLLEFPLLNKGSAFSMEERRNFNLLGLLPEVVETIEEQAERAWIQYQGFKTEIDKHIYLRNIQDTNETLFYRLVNNHLDEMMPVIYTPTVGAACERFSEIYRRSRGVFISYQNRHNMDDILQNVPNHNIKVIVVTDGERILGLGDQGIGGMGIPIGKLSLYTACGGISPAYTLPVVLDVGTNNQQLLNDPLYMGWRNPRITDDEYYEFVDEFIQAVKQRWPDVLLQFEDFAQKNAMPLLNRYRNEICSFNDDIQGTAAVTVGTLIAASRAAGGQLSEKKIVFLGAGSAGCGIAEMIIAQTQREGLSEEAARQKVFMVDRFGLLTDKMPNLLPFQTKLVQKRENLSDWDTDSDVLSLLDVVRNVKPDILIGVSGQTGLFTEEIIREMHKHCPRPIVMPLSNPTSRVEATPQDIIAWTEGNALVATGSPFNPVVWKDKIYPIAQCNNAFIFPGIGLGVIASGASRITDEMLMSASETLAQYSPLVLNGEGLVLPELKDIQKVSRAIAFAVGKMAQQQGVAVKTSAEALQQAIDDNFWQAEYRDYRRTSI.

Catalysis depends on Y104, which acts as the Proton donor. Position 157 (R157) interacts with NAD(+). K175 acts as the Proton acceptor in catalysis. The a divalent metal cation site is built by E246, D247, and D270. 2 residues coordinate NAD(+): D270 and N418.

This sequence belongs to the malic enzymes family. In terms of assembly, homotetramer. The cofactor is Mg(2+). It depends on Mn(2+) as a cofactor.

The catalysed reaction is (S)-malate + NAD(+) = pyruvate + CO2 + NADH. The enzyme catalyses oxaloacetate + H(+) = pyruvate + CO2. The protein is NAD-dependent malic enzyme of Shigella flexneri serotype 5b (strain 8401).